A 421-amino-acid polypeptide reads, in one-letter code: UDP-N-acetylglucosamine 1-carboxyvinyltransferase (421 aa).

22–23 is a binding site for phosphoenolpyruvate; that stretch reads KN. Arg-92 contributes to the UDP-N-acetyl-alpha-D-glucosamine binding site. Catalysis depends on Cys-116, which acts as the Proton donor. Cys-116 carries the post-translational modification 2-(S-cysteinyl)pyruvic acid O-phosphothioketal. 2 residues coordinate UDP-N-acetyl-alpha-D-glucosamine: Asp-306 and Val-328.

It belongs to the EPSP synthase family. MurA subfamily.

It is found in the cytoplasm. It catalyses the reaction phosphoenolpyruvate + UDP-N-acetyl-alpha-D-glucosamine = UDP-N-acetyl-3-O-(1-carboxyvinyl)-alpha-D-glucosamine + phosphate. It participates in cell wall biogenesis; peptidoglycan biosynthesis. In terms of biological role, cell wall formation. Adds enolpyruvyl to UDP-N-acetylglucosamine. This Thermotoga maritima (strain ATCC 43589 / DSM 3109 / JCM 10099 / NBRC 100826 / MSB8) protein is UDP-N-acetylglucosamine 1-carboxyvinyltransferase.